A 122-amino-acid chain; its full sequence is Large ribosomal subunit protein uL14 (122 aa).

It belongs to the universal ribosomal protein uL14 family. Part of the 50S ribosomal subunit. Forms a cluster with proteins L3 and L19. In the 70S ribosome, L14 and L19 interact and together make contacts with the 16S rRNA in bridges B5 and B8.

Binds to 23S rRNA. Forms part of two intersubunit bridges in the 70S ribosome. This chain is Large ribosomal subunit protein uL14, found in Anaeromyxobacter dehalogenans (strain 2CP-1 / ATCC BAA-258).